A 492-amino-acid chain; its full sequence is Probable Xaa-Pro aminopeptidase ACLA_020440 (492 aa).

Mn(2+)-binding residues include Asp272, Asp283, Glu421, and Glu460.

The protein belongs to the peptidase M24B family. Mn(2+) serves as cofactor.

The catalysed reaction is Release of any N-terminal amino acid, including proline, that is linked to proline, even from a dipeptide or tripeptide.. Catalyzes the removal of a penultimate prolyl residue from the N-termini of peptides. This Aspergillus clavatus (strain ATCC 1007 / CBS 513.65 / DSM 816 / NCTC 3887 / NRRL 1 / QM 1276 / 107) protein is Probable Xaa-Pro aminopeptidase ACLA_020440.